Reading from the N-terminus, the 248-residue chain is uncharacterized protein (248 aa).

An N-terminal signal peptide occupies residues 1 to 22 (MNKLQSYFIASVLYVMTPHAFA).

It to E.coli YjbG.

This is an uncharacterized protein from Escherichia coli (strain K12).